Here is a 318-residue protein sequence, read N- to C-terminus: cAMP/cGMP dual specificity phosphodiesterase MT0825 (318 aa).

The Fe cation site is built by aspartate 21, histidine 23, and aspartate 63. Residues histidine 23, aspartate 63, and 97–98 (NH) contribute to the AMP site. 4 residues coordinate Mn(2+): aspartate 63, asparagine 97, histidine 169, and histidine 207. Position 209 (histidine 209) interacts with Fe cation. Histidine 209 contributes to the AMP binding site. A C-terminal extension region spans residues 278-318 (PGQARRKIAESGIFIEPSRRDSLFKHPPMVLTSSAPRSPVD).

The protein belongs to the cyclic nucleotide phosphodiesterase class-III family. In terms of assembly, homodimer. Requires Fe(3+) as cofactor. Mn(2+) is required as a cofactor.

It localises to the cytoplasm. Its subcellular location is the cell membrane. It is found in the secreted. The protein localises to the cell wall. The protein resides in the cell envelope. It carries out the reaction a nucleoside 2',3'-cyclic phosphate + H2O = a nucleoside 3'-phosphate + H(+). It catalyses the reaction 2',3'-cyclophospho-AMP + H2O = 3'-AMP + H(+). The catalysed reaction is 2',3'-cyclophospho-GMP + H2O = 3'-GMP + H(+). The enzyme catalyses a nucleoside 3',5'-cyclic phosphate + H2O = a nucleoside 5'-phosphate + H(+). It carries out the reaction 3',5'-cyclic AMP + H2O = AMP + H(+). It catalyses the reaction 3',5'-cyclic GMP + H2O = GMP + H(+). Its function is as follows. Cyclic nucleotide phosphodiesterase with a dual-specificity for the second messengers cAMP and cGMP. This chain is cAMP/cGMP dual specificity phosphodiesterase MT0825, found in Mycobacterium tuberculosis (strain CDC 1551 / Oshkosh).